A 642-amino-acid chain; its full sequence is Threonine--tRNA ligase (642 aa).

The region spanning 1-61 is the TGS domain; it reads MPVITLPDGS…DTDSELSIIT (61 aa). The tract at residues 243 to 534 is catalytic; that stretch reads DHRKIGKQLD…LIEEYAGKFP (292 aa). Positions 334, 385, and 511 each coordinate Zn(2+).

The protein belongs to the class-II aminoacyl-tRNA synthetase family. As to quaternary structure, homodimer. It depends on Zn(2+) as a cofactor.

Its subcellular location is the cytoplasm. It carries out the reaction tRNA(Thr) + L-threonine + ATP = L-threonyl-tRNA(Thr) + AMP + diphosphate + H(+). Catalyzes the attachment of threonine to tRNA(Thr) in a two-step reaction: L-threonine is first activated by ATP to form Thr-AMP and then transferred to the acceptor end of tRNA(Thr). Also edits incorrectly charged L-seryl-tRNA(Thr). The polypeptide is Threonine--tRNA ligase (Shewanella piezotolerans (strain WP3 / JCM 13877)).